The primary structure comprises 920 residues: Chitin synthase C (920 aa).

2 disordered regions span residues 1–41 (MSYN…NAYQ) and 140–173 (IPML…SPAP). Over residues 154 to 163 (YSDEYQVEEQ) the composition is skewed to acidic residues. 5 helical membrane-spanning segments follow: residues 466–486 (SAFG…FVAL), 564–584 (RWLN…YQIW), 608–628 (LFAW…TTYL), 640–660 (VLGV…FVLA), and 675–695 (MVYF…FVTV). N-linked (GlcNAc...) asparagine glycosylation is present at Asn-715. Transmembrane regions (helical) follow at residues 718 to 738 (FFTI…ASII), 749 to 769 (FIQY…YAFC), 847 to 867 (AVVL…LSAA), and 892 to 912 (VVLW…LWYL).

The protein belongs to the chitin synthase family. Class I subfamily.

It is found in the cell membrane. The catalysed reaction is [(1-&gt;4)-N-acetyl-beta-D-glucosaminyl](n) + UDP-N-acetyl-alpha-D-glucosamine = [(1-&gt;4)-N-acetyl-beta-D-glucosaminyl](n+1) + UDP + H(+). Functionally, polymerizes chitin, a structural polymer of the cell wall and septum, by transferring the sugar moiety of UDP-GlcNAc to the non-reducing end of the growing chitin polymer. Involved in hyphal growth. This is Chitin synthase C from Aspergillus oryzae (strain ATCC 42149 / RIB 40) (Yellow koji mold).